The chain runs to 101 residues: NADH-quinone oxidoreductase subunit K (101 aa).

A run of 3 helical transmembrane segments spans residues 4-24 (LAHF…GIFL), 30-50 (IVLL…FVAF), and 61-81 (VFVF…LAIL).

The protein belongs to the complex I subunit 4L family. NDH-1 is composed of 14 different subunits. Subunits NuoA, H, J, K, L, M, N constitute the membrane sector of the complex.

Its subcellular location is the cell inner membrane. It catalyses the reaction a quinone + NADH + 5 H(+)(in) = a quinol + NAD(+) + 4 H(+)(out). Functionally, NDH-1 shuttles electrons from NADH, via FMN and iron-sulfur (Fe-S) centers, to quinones in the respiratory chain. The immediate electron acceptor for the enzyme in this species is believed to be ubiquinone. Couples the redox reaction to proton translocation (for every two electrons transferred, four hydrogen ions are translocated across the cytoplasmic membrane), and thus conserves the redox energy in a proton gradient. The protein is NADH-quinone oxidoreductase subunit K of Cupriavidus metallidurans (strain ATCC 43123 / DSM 2839 / NBRC 102507 / CH34) (Ralstonia metallidurans).